Consider the following 802-residue polypeptide: Protein SBE22 (802 aa).

Disordered stretches follow at residues 207 to 230 and 323 to 345; these read SSTINANNMKSTGTLPPFRPRSNS and SGDPKHVRSHQSKPQPRFPQRHN.

It belongs to the SBE2 family.

The protein localises to the cytoplasm. The protein resides in the golgi apparatus. With SBE2, is involved in cell wall integrity and polarity processes like bud growth. In Vanderwaltozyma polyspora (strain ATCC 22028 / DSM 70294 / BCRC 21397 / CBS 2163 / NBRC 10782 / NRRL Y-8283 / UCD 57-17) (Kluyveromyces polysporus), this protein is Protein SBE22 (SBE22).